A 212-amino-acid chain; its full sequence is Ribosomal RNA large subunit methyltransferase E (212 aa).

Residues glycine 56, tryptophan 58, aspartate 78, aspartate 94, and aspartate 117 each contribute to the S-adenosyl-L-methionine site. Lysine 157 (proton acceptor) is an active-site residue.

The protein belongs to the class I-like SAM-binding methyltransferase superfamily. RNA methyltransferase RlmE family.

The protein resides in the cytoplasm. The enzyme catalyses uridine(2552) in 23S rRNA + S-adenosyl-L-methionine = 2'-O-methyluridine(2552) in 23S rRNA + S-adenosyl-L-homocysteine + H(+). In terms of biological role, specifically methylates the uridine in position 2552 of 23S rRNA at the 2'-O position of the ribose in the fully assembled 50S ribosomal subunit. The protein is Ribosomal RNA large subunit methyltransferase E of Ehrlichia chaffeensis (strain ATCC CRL-10679 / Arkansas).